A 94-amino-acid chain; its full sequence is Small ribosomal subunit protein uS19 (94 aa).

It belongs to the universal ribosomal protein uS19 family.

In terms of biological role, protein S19 forms a complex with S13 that binds strongly to the 16S ribosomal RNA. The protein is Small ribosomal subunit protein uS19 of Moorella thermoacetica (strain ATCC 39073 / JCM 9320).